The chain runs to 977 residues: Probable RNA-dependent RNA polymerase 5 (977 aa).

The tract at residues 103–122 (EEMSVDSDAPSPKSLKSEDK) is disordered.

This sequence belongs to the RdRP family.

The catalysed reaction is RNA(n) + a ribonucleoside 5'-triphosphate = RNA(n+1) + diphosphate. Its function is as follows. Probably involved in the RNA silencing pathway and required for the generation of small interfering RNAs (siRNAs). This Arabidopsis thaliana (Mouse-ear cress) protein is Probable RNA-dependent RNA polymerase 5 (RDR5).